The chain runs to 287 residues: Type 1 encapsulin shell protein EncA (287 aa).

The protein belongs to the encapsulin family. Family 1 subfamily. The 32 nm encapsulin nanocompartment is formed by 180 subunits; monomers form pentamers which assemble to form shells. There are 36 pores where the pentamers meet as well as 3-fold axis channels and dimer channels. The N-terminus of the protein is inside the shell.

Its subcellular location is the encapsulin nanocompartment. Its function is as follows. Shell component of a type 1, iron-storage encapsulin nanocompartment. Encapsulin nanocompartments are 32 nm in diameter with an iron- and phosphorus-rich core (4Fe:1P) about 24 nm in diameter. Upon expression in E.coli most particles are 32 nm, 20% are 18 nm. The core is filled with an average of 14 dense granules, 5-6 nm in diameter that are not evenly distributed. Each nanocompartment is estimated to hold 30,000-35,000 Fe atoms. The minor proteins EncB, EncC and EncD probably lie against the interior face of the nanocompartment. This is Type 1 encapsulin shell protein EncA from Myxococcus xanthus (strain DK1622).